Here is a 251-residue protein sequence, read N- to C-terminus: Hydroxyacylglutathione hydrolase (251 aa).

Residues His-53, His-55, Asp-57, His-58, His-109, Asp-126, and His-164 each coordinate Zn(2+).

This sequence belongs to the metallo-beta-lactamase superfamily. Glyoxalase II family. Monomer. Zn(2+) is required as a cofactor.

It carries out the reaction an S-(2-hydroxyacyl)glutathione + H2O = a 2-hydroxy carboxylate + glutathione + H(+). It participates in secondary metabolite metabolism; methylglyoxal degradation; (R)-lactate from methylglyoxal: step 2/2. Functionally, thiolesterase that catalyzes the hydrolysis of S-D-lactoyl-glutathione to form glutathione and D-lactic acid. This chain is Hydroxyacylglutathione hydrolase, found in Wigglesworthia glossinidia brevipalpis.